Here is a 229-residue protein sequence, read N- to C-terminus: Large ribosomal subunit protein uL1 (229 aa).

The protein belongs to the universal ribosomal protein uL1 family. In terms of assembly, part of the 50S ribosomal subunit.

Binds directly to 23S rRNA. The L1 stalk is quite mobile in the ribosome, and is involved in E site tRNA release. In terms of biological role, protein L1 is also a translational repressor protein, it controls the translation of the L11 operon by binding to its mRNA. This chain is Large ribosomal subunit protein uL1, found in Desulforamulus reducens (strain ATCC BAA-1160 / DSM 100696 / MI-1) (Desulfotomaculum reducens).